The chain runs to 658 residues: MNTEATDSQLSVLIKKEKIVPDSQEVDGNTTRELGDNTLDEIINGQFSPLMSQNSENELEKHLRSTPGIEGVFESLLHNEIQEPDITHLSLMSTHPSESGRQPELIKTRTRTPRIVNDGPLQQTSRSELLDLNALFDTEESALMNQSIESETTLTQFLGGSQPIDYLRERTKEEQDKRNQMRQEEKLIKKMQKAQVEKARSEMFSERNHEFEPMECDNDEEDVFRAVKEDSSNREKEEEWLTFEVKKERASKVSDFEFETVVNDGIYLWAKMKCNIPFIVKWNVSSCHKQLFLKVRLVNYMASDNIENSIRVPSNLAKCHNHRMTEEKTPRESFFYVVKSGEHWTPQINSKKDQCFVAKLAPGTTQVLFDLIFKCQRSCLDLAERRKRMCLAVFLEDENGNELLHDVIKQLLIVGYPRRDWKNFCEKRGDFKFSEKSLLVQTTNNIFADQSSLHSGPSSPEKVTDTSQMFQSTSSSSRKRAASDVKFVASAVPSSDQQSYPMRLHGCESRRMEMSFYRKFKENEDSLSNKRPRSQYGLQRQVKLSEKEYSKFVAFFAKEGENEISKYASAHCLTPAQASRLDPSDKIEKFLAFVGDESAADNFRKHGLFTMLDLDKYFQVYDSAFETIGVDSSKMEKYYDLFLHYHRVQENIRYNQPK.

The DNA-binding element occupies 238-428 (EEWLTFEVKK…RDWKNFCEKR (191 aa)). Residues Cys-319, His-322, Cys-375, and Cys-379 each contribute to the Zn(2+) site. The disordered stretch occupies residues 450–477 (QSSLHSGPSSPEKVTDTSQMFQSTSSSS). Residues 466-476 (TSQMFQSTSSS) are compositionally biased toward low complexity. The interval 535–564 (QYGLQRQVKLSEKEYSKFVAFFAKEGENEI) is required for tertiary structure stability of the protein.

The protein belongs to the p53 family. In terms of assembly, homodimer. Interacts (via C-terminus domain) with prmt-5; not methylated by prmt-5. Interacts with cbp-1 (via HAT domain); cep-1 transcriptional activity may be inhibited by interaction with methylated cbp-1. Component of a complex that contains prmt-5 and cbp-1. Interacts with ape-1; the interaction inhibits pro-apoptotic activity of cep-1. The cofactor is Zn(2+). Phosphorylated in response to IR-induced DNA damage which is thought to be mediated by akt-1.

The protein localises to the nucleus. Its function is as follows. Transcriptional activator that binds the same DNA consensus sequence as p53. Has a role in normal development to ensure proper meiotic chromosome segregation. Promotes apoptosis under conditions of cellular and genotoxic stress in response to DNA damage, hypoxia, or starvation. However, not required for DNA repair in response to UV-C or to regulate cell-cycle progression. Regulates germline apoptosis in response to DNA damage. Required for induction of ced-13 in response to DNA damage. Its pro-apoptotic activity is inhibited when bound to ape-1 in vitro. Regulates germline proliferation by activating phg-1. Regulates DNA damage-induced apoptosis by inducing transcription of the programmed cell death activator egl-1. Negatively regulates lifespan. The protein is Transcription factor cep-1 of Caenorhabditis briggsae.